Reading from the N-terminus, the 444-residue chain is Cell division cycle 20.4, cofactor of APC complex (444 aa).

Polar residues predominate over residues 88-99 (LLSTNHSDSPHQ). The segment at 88 to 108 (LLSTNHSDSPHQNPKPVKPRR) is disordered. WD repeat units follow at residues 124–161 (RDDF…TSEL), 166–205 (EDKG…QVRT), 209–246 (GHES…SIVE), 250–289 (GHTE…SKQT), 298–340 (EHTA…CLNS), 342–383 (ETGS…KMAE), and 386–425 (GHTS…PKTT).

Belongs to the WD repeat CDC20/Fizzy family. In terms of assembly, the APC/C is composed of at least 11 subunits that stay tightly associated throughout the cell cycle.

The protein localises to the cytoplasm. It participates in protein modification; protein ubiquitination. Functionally, component of the anaphase promoting complex/cyclosome (APC/C), a cell cycle-regulated E3 ubiquitin-protein ligase complex that controls progression through mitosis and the G1 phase of the cell cycle. This chain is Cell division cycle 20.4, cofactor of APC complex (CDC20-4), found in Arabidopsis thaliana (Mouse-ear cress).